The primary structure comprises 374 residues: Type IV secretion system protein PtlG (374 aa).

A helical membrane pass occupies residues 38–56 (WMFALVAVALSCLLATGIW). Positions 86–117 (HPREPEPAPLPDMPAAPDPILPQPRPAPPVPP) are disordered. Residues 92–117 (PAPLPDMPAAPDPILPQPRPAPPVPP) show a composition bias toward pro residues.

It belongs to the TrbI/VirB10 family.

It localises to the cell membrane. In terms of biological role, component of the type IV secretion system ptl required for secretion of assembled pertussis toxin (PTX) through the outer membrane. The protein is Type IV secretion system protein PtlG (ptlG) of Bordetella pertussis (strain Tohama I / ATCC BAA-589 / NCTC 13251).